A 340-amino-acid chain; its full sequence is Putative inactive cytochrome P450 family member 4Z2 (340 aa).

Topologically, residues 1 to 9 (MEPSWLQEL) are cytoplasmic. A helical; Signal-anchor for type II membrane protein membrane pass occupies residues 10–30 (MAHPFLLLILLCMSLLLFQVI). The Lumenal segment spans residues 31 to 340 (RLYQRRRWTI…AKYPEHQQRC (310 aa)).

It belongs to the cytochrome P450 family. It depends on heme as a cofactor. In terms of tissue distribution, detected at low levels in mammary gland and mammary carcinoma.

It is found in the membrane. The sequence is that of Putative inactive cytochrome P450 family member 4Z2 (CYP4Z2P) from Homo sapiens (Human).